Here is a 603-residue protein sequence, read N- to C-terminus: Ribosome-inactivating protein PMRIPt (603 aa).

Residues 1 to 39 form the signal peptide; it reads MRVVAGILYIVVMAICGLGIQGGTLQDYPSVYFQDSTLQ. 2 N-linked (GlcNAc...) asparagine glycosylation sites follow: asparagine 74 and asparagine 168. Glutamate 208 is a catalytic residue. 3 cysteine pairs are disulfide-bonded: cysteine 297-cysteine 335, cysteine 351-cysteine 370, and cysteine 392-cysteine 409. Ricin B-type lectin domains are found at residues 338–466 and 467–593; these read GEPT…VGDD and VEPI…WMTM. The 1-alpha repeat unit spans residues 348-388; that stretch reads DGLCMDVRNESNNDGIPIQLWPCGAQRNQQWTFHTDGTIQS. Residues asparagine 356 and asparagine 408 are each glycosylated (N-linked (GlcNAc...) asparagine). A 1-beta repeat occupies 389 to 430; it reads MGKCMTSNGYHPGDYVMIFNCSTAPVPDATKWVVSIDGSITN. One copy of the 1-gamma repeat lies at 433 to 466; it reads SGLVLTAPQAAQTTILLVVRNTHSAKQGRSVGDD. One copy of the 2-alpha repeat lies at 478-516; the sequence is KYMCLQGNNENNTRVWLEDCAVDRPQQWWALYSDGTIRV. 2 cysteine pairs are disulfide-bonded: cysteine 481-cysteine 497 and cysteine 523-cysteine 540. Residue asparagine 488 is glycosylated (N-linked (GlcNAc...) asparagine). One copy of the 2-beta repeat lies at 520 to 558; it reads RSLCVTSDGHSSRDAIIILTCDGGINQRLVFNTDGTILN. The stretch at 561 to 597 is one 2-gamma repeat; that stretch reads AQLVMDVRQSNVALRQIILYQPTGNPNQQWMTMITRT.

This sequence belongs to the ribosome-inactivating protein family. Type 2 RIP subfamily. In terms of assembly, tetramer of four pairs of disulfide bound A-B chains. The precursor is processed in two chains, A and B, that are linked by a disulfide bond. Post-translationally, glycosylated. As to expression, expressed in rhizome and more abundantly in leaves (at protein level).

The catalysed reaction is Endohydrolysis of the N-glycosidic bond at one specific adenosine on the 28S rRNA.. Strongly inhibited by asialofetuin and asialomucin. In terms of biological role, galNAc-specific agglutinin. Behaves as a type-2 ribosome-inactivating protein. Inhibits mammalian ribosomes. The A chain is responsible for inhibiting protein synthesis through the catalytic inactivation of 60S ribosomal subunits by removing adenine from position 4,324 of 28S rRNA. The B chain binds to cell receptors and probably facilitates the entry into the cell of the A chain; B chains are also responsible for cell agglutination (lectin activity). Involved in plant defense against insects. Has very low cytotoxic activity against the human tumor cell lines CEM and Molt4. The polypeptide is Ribosome-inactivating protein PMRIPt (Polygonatum multiflorum (Solomon's seal)).